Reading from the N-terminus, the 286-residue chain is MTKADTIFKENITKIMEEGVWSEQARPKYKDGTTANSKYITGSFAEYDLSKGEFPITTLRPIAIKSAIKEVFWIYQDQTNSLDVLEDKYNVHYWNDWEVEGVPANNGDKRSIGQRYGAVVKKHDIINRLLAQLEANPWNRRNVISLWDYEAFEETAGLQPCAFQTMFDVRRVGEDVYLDATLTQRSNDMLVAHHINAMQYVALQMMIAKHFGWKVGKFFYFINNLHIYDNQFEQAEELLKRQPSDCQPRLVLNVPDETNFFDIKPEDFELVDYDPVKPQLKFDLAI.

DUMP is bound at residue 140 to 141; sequence RR. C161 serves as the catalytic Nucleophile. DUMP-binding positions include 185–188, N196, and 226–228; these read RSND and HIY. D188 serves as a coordination point for (6R)-5,10-methylene-5,6,7,8-tetrahydrofolate. A285 serves as a coordination point for (6R)-5,10-methylene-5,6,7,8-tetrahydrofolate.

It belongs to the thymidylate synthase family. Bacterial-type ThyA subfamily. As to quaternary structure, homodimer.

Its subcellular location is the cytoplasm. It carries out the reaction dUMP + (6R)-5,10-methylene-5,6,7,8-tetrahydrofolate = 7,8-dihydrofolate + dTMP. The protein operates within pyrimidine metabolism; dTTP biosynthesis. Catalyzes the reductive methylation of 2'-deoxyuridine-5'-monophosphate (dUMP) to 2'-deoxythymidine-5'-monophosphate (dTMP) while utilizing 5,10-methylenetetrahydrofolate (mTHF) as the methyl donor and reductant in the reaction, yielding dihydrofolate (DHF) as a by-product. This enzymatic reaction provides an intracellular de novo source of dTMP, an essential precursor for DNA biosynthesis. This chain is Thymidylate synthase, found in Streptococcus thermophilus (strain ATCC BAA-491 / LMD-9).